The following is an 833-amino-acid chain: AdoMet-dependent rRNA methyltransferase SPB1 (833 aa).

S-adenosyl-L-methionine-binding residues include Gly-59, Trp-61, Asp-79, Asp-95, and Asp-120. The active-site Proton acceptor is the Lys-160. 2 coiled-coil regions span residues 348–389 (EEEQ…QLNM) and 453–481 (RDELAEADELESQLDAMYSNYKERKSERD). Residues 477-493 (KSERDAKFRAKQARESS) show a composition bias toward basic and acidic residues. 3 disordered regions span residues 477–532 (KSER…SDDD), 592–645 (KRKL…EKHS), and 776–810 (VTKKAKQKPKVTVVVASGKNRGLSGRPKGVKGKYK). 2 stretches are compositionally biased toward acidic residues: residues 505-532 (QSDEENEEETKDYVDDDDNSDLSDSDDD) and 622-634 (EDGDVDSEYDSEE). A compositionally biased stretch (basic and acidic residues) spans 635 to 645 (EAKRTKQEKHS). Residues 730-782 (AEAKARKKHRAVARLEKLKKKAGLINDDSDKSEKDKAEEIAKLMRKVTKKAKQ) are a coiled coil.

Belongs to the class I-like SAM-binding methyltransferase superfamily. RNA methyltransferase RlmE family. SPB1 subfamily. As to quaternary structure, component of the nucleolar and nucleoplasmic pre-60S ribosomal particle.

The protein resides in the nucleus. It is found in the nucleolus. The catalysed reaction is a ribonucleotide in rRNA + S-adenosyl-L-methionine = a 2'-O-methylribonucleotide in rRNA + S-adenosyl-L-homocysteine + H(+). Required for proper assembly of pre-ribosomal particles during the biogenesis of the 60S ribosomal subunit. The chain is AdoMet-dependent rRNA methyltransferase SPB1 from Kluyveromyces lactis (strain ATCC 8585 / CBS 2359 / DSM 70799 / NBRC 1267 / NRRL Y-1140 / WM37) (Yeast).